The primary structure comprises 481 residues: Sphingosine kinase 2 (481 aa).

Residues 111–253 (GRPKRLLVFV…VDVATIAQGN (143 aa)) form the DAGKc domain. ATP-binding positions include 121–123 (NPF) and Thr153. 178–181 (SGDG) is a substrate binding site. Residue Asp180 is the Proton donor/acceptor of the active site. ATP is bound by residues Glu185 and 210–212 (GTG). Asp271 lines the substrate pocket. ATP-binding positions include Arg278, Arg284, and 441–443 (DGE).

Requires Mg(2+) as cofactor. In terms of tissue distribution, highly expressed in flowers and siliques and at lower levels in roots, leaves and stems.

It is found in the vacuole membrane. The enzyme catalyses a sphingoid base + ATP = a sphingoid 1-phosphate + ADP + H(+). Activated by phosphatidic acid (PA). Binding with PA stimulates the activity by promoting the binding of substrate to the catalytic site. In terms of biological role, involved in the production of sphingolipid metabolites. Phosphorylates sphingosine and various l sphingoid long-chain base (LCB) products, such as phytosphingosine (PHS, 4-hydroxysphinganine), 4-hydroxy-8-sphingenine, 4,8-sphingadienine and D-erythro-dihydrosphingosine, but has a very few activity toward D,L-threo- dihydrosphingosine. Is required for abscisic acid (ABA) signaling that mediates stomatal closure, inhibition of seed germination and root elongation. May function upstream of PLDALPHA1 and phosphatidic acid (PA) in an amplification response to ABA that mediates stomatal closure. The sequence is that of Sphingosine kinase 2 (SPHK2) from Arabidopsis thaliana (Mouse-ear cress).